A 137-amino-acid chain; its full sequence is Bombinin-like peptides 1 (137 aa).

An N-terminal signal peptide occupies residues M1–A18. Residue N70 is modified to Asparagine amide. The segment at L91 to E112 is disordered. I118 carries the post-translational modification D-allo-isoleucine. I136 bears the Isoleucine amide mark.

The protein belongs to the bombinin family. In terms of tissue distribution, expressed by the skin glands.

It is found in the secreted. In terms of biological role, has antimicrobial activity, but no hemolytic activity. Preliminary evidence indicates that this peptide does not lyse and thus kill the bacteria by its antimicrobial activity. Functionally, bombinin H has antibacterial and hemolytic activity. This chain is Bombinin-like peptides 1, found in Bombina variegata (Yellow-bellied toad).